A 780-amino-acid chain; its full sequence is Gelsolin (780 aa).

Position 1 is an N-acetylmethionine; alternate (Met-1). Positions 1 to 25 (MAPYRSSLLCALLLLALCALSPSHA) are cleaved as a signal peptide. The tract at residues 51–174 (VVEHPEFLKA…YKKGGVASGF (124 aa)) is actin-severing. Residues 74–155 (FDLVPVPPNL…EVQGFESSTF (82 aa)) form a Gelsolin-like 1 repeat. The residue at position 84 (Tyr-84) is a Phosphotyrosine. The Ca(2+) site is built by Gly-90, Asp-91, Glu-122, Asp-134, Gly-139, and Ala-141. Residues 121–124 (DESG) are actin-actin interfilament contact point. 160-167 (KSGLKYKK) contributes to the a 1,2-diacyl-sn-glycero-3-phospho-(1D-myo-inositol-4,5-bisphosphate) binding site. Val-170 contributes to the Ca(2+) binding site. 186 to 194 (RLFQVKGRR) contacts a 1,2-diacyl-sn-glycero-3-phospho-(1D-myo-inositol-4,5-bisphosphate). Residues 196 to 268 (VRATEVPVSW…SEEGGEPEAM (73 aa)) form a Gelsolin-like 2 repeat. Gly-211 and Asp-212 together coordinate Ca(2+). Residues Cys-213 and Cys-226 are joined by a disulfide bond. Glu-234 contacts Ca(2+). Residues 244–269 (GIRDNERSGRAQVHVSEEGGEPEAML) are disordered. Residues Asp-284, Glu-327, Asp-328, and Glu-352 each contribute to the Ca(2+) site. The Gelsolin-like 3 repeat unit spans residues 315–387 (DENPFAQGAL…LPEGGETPLF (73 aa)). A phosphotyrosine mark is found at Tyr-407 and Tyr-463. The actin-binding, Ca-sensitive stretch occupies residues 432–780 (AAQHGMDDDG…LDRALAELAA (349 aa)). The stretch at 453-534 (SNKVPVDPAT…VQGKEPAHLM (82 aa)) is one Gelsolin-like 4 repeat. 7 residues coordinate Ca(2+): Gly-469, Asp-470, Glu-500, Asp-512, Gly-517, Pro-519, and Thr-549. The Gelsolin-like 5 repeat unit spans residues 575-640 (RAVEVMPKSG…EEGSEPDAFW (66 aa)). Lys-582 carries the post-translational modification N6-acetyllysine. Residues Asn-589 and Asp-590 each coordinate Ca(2+). A Phosphotyrosine modification is found at Tyr-601. Glu-612 contributes to the Ca(2+) binding site. A Phosphotyrosine modification is found at Tyr-649. A Gelsolin-like 6 repeat occupies 679–754 (IEEVPGELMQ…VRQGFEPPSF (76 aa)). Asp-694, Asp-695, and Glu-717 together coordinate Ca(2+). Position 740 is a phosphothreonine (Thr-740).

Belongs to the villin/gelsolin family. In terms of assembly, binds to actin and to fibronectin. Identified in a complex composed of ACTA1, COBL, GSN and TMSB4X. Interacts with the inactive form of EIF2AK2/PKR. Interacts with FLII. Post-translationally, phosphorylated on tyrosine residues in vitro.

The protein resides in the cytoplasm. It localises to the cytoskeleton. Its subcellular location is the secreted. In terms of biological role, calcium-regulated, actin-modulating protein that binds to the plus (or barbed) ends of actin monomers or filaments, preventing monomer exchange (end-blocking or capping). It can promote the assembly of monomers into filaments (nucleation) as well as sever filaments already formed. Plays a role in ciliogenesis. The polypeptide is Gelsolin (Gsn) (Mus musculus (Mouse)).